A 281-amino-acid chain; its full sequence is Para-Rep C9 (281 aa).

In terms of domain architecture, CRESS-DNA virus Rep endonuclease spans 1 to 95; sequence MSAVNWVFTL…VAGPWSYGEL (95 aa). Positions 7–10 match the RCR-1 motif; it reads VFTL. The a divalent metal cation site is built by glutamate 33 and histidine 39. The short motif at 39-41 is the RCR-2 element; that stretch reads HIQ. The Nuclear localization signal signature appears at 48–69; that stretch reads KKAKMNTVKNIIGGNPHLEKMK. Tyrosine 78 serves as the catalytic For DNA cleavage activity. Positions 78–81 match the RCR-3 motif; sequence YAQK. Glutamate 83 contacts a divalent metal cation. The Nuclear localization signal motif lies at 95 to 101; the sequence is LLKKGSH. Residue 178–180 participates in ATP binding; sequence GKS.

It belongs to the nanoviridea/circoviridae replication-associated protein family. Homooligomer (Potential). Rep binds to repeated DNA motifs (iterons). Mg(2+) is required as a cofactor. The cofactor is Mn(2+).

The protein resides in the host nucleus. The enzyme catalyses ATP + H2O = ADP + phosphate + H(+). Functionally, initiates and terminates the replication only of its own subviral DNA molecule. The closed circular ssDNA genome is first converted to a superhelical dsDNA. Rep binds a specific hairpin at the genome origin of replication. Introduces an endonucleolytic nick within the intergenic region of the genome, thereby initiating the rolling circle replication (RCR). Following cleavage, binds covalently to the 5'-phosphate of DNA as a tyrosyl ester. The cleavage gives rise to a free 3'-OH that serves as a primer for the cellular DNA polymerase. The polymerase synthesizes the (+) strand DNA by rolling circle mechanism. After one round of replication, a Rep-catalyzed nucleotidyl transfer reaction releases a circular single-stranded virus genome, thereby terminating the replication. Displays origin-specific DNA cleavage, nucleotidyl transferase, ATPase and helicase activities. This Faba bean necrotic yellows C9 alphasatellite (FBNYC9A) protein is Para-Rep C9 (C9).